Reading from the N-terminus, the 558-residue chain is Aspartate--tRNA ligase 2, cytoplasmic (558 aa).

Positions 1–18 (MSSESEIPPLSSSTAAAE) are enriched in low complexity. The disordered stretch occupies residues 1–57 (MSSESEIPPLSSSTAAAEESGEKTSKKAAKKEAAKLEKLRRRQEQEEATRRTASISL). Serine 2 carries the post-translational modification N-acetylserine. Positions 20-50 (SGEKTSKKAAKKEAAKLEKLRRRQEQEEATR) are enriched in basic and acidic residues. Residues 110-195 (VLIRGRVHTN…QVEIQVRKVY (86 aa)) constitute a DNA-binding region (OB). Glutamate 286 serves as a coordination point for L-aspartate. Residues 308–311 (QLHK) form an aspartate region. Arginine 330 serves as a coordination point for L-aspartate. ATP is bound by residues 330-332 (RAE), 338-340 (RHL), and glutamate 481. Mg(2+) contacts are provided by glutamate 481 and serine 484. L-aspartate contacts are provided by serine 484 and arginine 488. 529–532 (GLER) contacts ATP.

Belongs to the class-II aminoacyl-tRNA synthetase family. Type 2 subfamily.

The protein localises to the cytoplasm. It is found in the cytosol. Its subcellular location is the endoplasmic reticulum. The enzyme catalyses tRNA(Asp) + L-aspartate + ATP = L-aspartyl-tRNA(Asp) + AMP + diphosphate. Functionally, catalyzes the specific attachment of an amino acid to its cognate tRNA in a 2 step reaction: the amino acid (AA) is first activated by ATP to form AA-AMP and then transferred to the acceptor end of the tRNA. Involved in the perception of beta-aminobutyric acid (BABA) and required for BABA priming effect in disease resistance. The polypeptide is Aspartate--tRNA ligase 2, cytoplasmic (Arabidopsis thaliana (Mouse-ear cress)).